Here is a 637-residue protein sequence, read N- to C-terminus: Probable ATP-binding protein YheS (637 aa).

2 ABC transporter domains span residues 2 to 246 (IVFS…AQQQ) and 313 to 527 (LKME…KQEN). ATP is bound by residues 34–41 (GKNGCGKS) and 345–352 (GRNGAGKS). The disordered stretch occupies residues 523 to 559 (QKQENQTDEAPKENANSAQARKDQKRREAELRAQTQP). Over residues 542–553 (ARKDQKRREAEL) the composition is skewed to basic and acidic residues.

The protein belongs to the ABC transporter superfamily. ABCF family. YheS subfamily.

Functionally, genetic data indicate it may be involved in ribosome assembly or function. This is Probable ATP-binding protein YheS (yheS) from Escherichia coli O157:H7.